Consider the following 786-residue polypeptide: MAKKSAIKRKVKAPESINEQASVSEQSENEEDEDLLQAVKDPGEDTTDDEGIDQEYQSDTSDDLLFESDEEGNYLGRKEASSGEDEQGEEDDNDDEEEEDEDEEESGSSDDDAKDDQPSGSKATLSKTTGDSSNIAVAIPPRRDPSKPEYENSDTSDEEDIRNTVGNIPMHWYDEYKHIGYDWDAKKIIKPPKGDQIDDFLRKIEDPDFWRTVKDPQTGQEVLLTDEDIALIKRVNSARIPNPEHNEYEPWIEWFSSQVEKMPIKNVPDHKRSFLPSVSEKKKVSRMVHALKMGWMKTTEEVERDKQQKRGPKFYMLWETDTGREHIRRIHDPVSAPKRDLPGHAESYNPPPEYLFDAKEMKEWLKYKDEPHKRKLHFMPQKFKSLREVPAYSRFLRERFLRCLDLYLCPRAKRVKLNIDAEYLIPKLPSPRDLQPFPTVESLVYRGHTDLVRSVSVEPKGEYIVSGSDDKTVKIWEIATGRCIRTIETNDVVRCVAWCPNAKLSIIAVATGTRLLLINPKVGDKLLVKKTDDLLAEAPSSDVIESERIKTAVQWSNAEPEEQEKGVRVVITHFKPIRQVTWHGRGDYLATVMPEGANRSALIHQLSKRRSQIPFSKSKGLIQCVLFHPVKPCFFVATQHNIRIYDLVKQELIKKLLTNSKWISGMSIHPKGDNLLVSTYDKKMLWFDLDLSTKPYQTMRLHRNAVRSIAFHLRYPLFASGSDDQAVIVSHGMVYNDLLQNPLIVPLKKLQTHEKRDEFGVLDVNWHPVQPWIFSTGADCTIRLYT.

Over residues 1 to 11 the composition is skewed to basic residues; the sequence is MAKKSAIKRKV. The disordered stretch occupies residues 1-161; it reads MAKKSAIKRK…NSDTSDEEDI (161 aa). Over residues 17–26 the composition is skewed to polar residues; the sequence is INEQASVSEQ. Acidic residues-rich tracts occupy residues 44-53, 60-72, and 82-114; these read EDTTDDEGID, TSDD…DEEG, and SGED…DDAK. The segment covering 122-135 has biased composition (polar residues); that stretch reads KATLSKTTGDSSNI. Positions 141-150 are enriched in basic and acidic residues; it reads PRRDPSKPEY. Residues 151–160 are compositionally biased toward acidic residues; it reads ENSDTSDEED. 7 WD repeats span residues 447-488, 490-528, 572-614, 617-655, 658-697, 701-740, and 756-786; these read GHTD…RTIE, NDVV…KLLV, THFK…SQIP, KSKG…LIKK, TNSK…KPYQ, LHRN…DLLQ, and RDEF…RLYT.

The protein belongs to the WD repeat BOP1/ERB1 family.

It is found in the nucleus. Its subcellular location is the nucleolus. The protein resides in the nucleoplasm. Required for maturation of ribosomal RNAs and formation of the large ribosomal subunit. The sequence is that of Ribosome biogenesis protein BOP1 homolog from Drosophila grimshawi (Hawaiian fruit fly).